The following is a 231-amino-acid chain: DNA mismatch repair protein MutH (231 aa).

This sequence belongs to the MutH family.

Its subcellular location is the cytoplasm. Sequence-specific endonuclease that cleaves unmethylated GATC sequences. It is involved in DNA mismatch repair. The polypeptide is DNA mismatch repair protein MutH (Shewanella woodyi (strain ATCC 51908 / MS32)).